The sequence spans 510 residues: Coatomer subunit delta (510 aa).

In terms of domain architecture, MHD spans 270-510 (MESVHMKIEE…TFLVDKYEIL (241 aa)).

Belongs to the adaptor complexes medium subunit family. Delta-COP subfamily. Oligomeric complex that consists of at least the alpha, beta, beta', gamma, delta, epsilon and zeta subunits.

The protein resides in the cytoplasm. It localises to the golgi apparatus membrane. The protein localises to the cytoplasmic vesicle. Its subcellular location is the COPI-coated vesicle membrane. Functionally, the coatomer is a cytosolic protein complex that binds to dilysine motifs and reversibly associates with Golgi non-clathrin-coated vesicles, which further mediate biosynthetic protein transport from the ER, via the Golgi up to the trans Golgi network. Coatomer complex is required for budding from Golgi membranes, and is essential for the retrograde Golgi-to-ER transport of dilysine-tagged proteins. In mammals, the coatomer can only be recruited by membranes associated to ADP-ribosylation factors (ARFs), which are small GTP-binding proteins; the complex also influences the Golgi structural integrity, as well as the processing, activity, and endocytic recycling of LDL receptors. In Gallus gallus (Chicken), this protein is Coatomer subunit delta (ARCN1).